The sequence spans 535 residues: KNR4/SMI1 homolog (535 aa).

Basic and acidic residues predominate over residues 354 to 363 (ERKLPEEPKR). Residues 354–535 (ERKLPEEPKR…LKDDFENVAL (182 aa)) are disordered. 3 stretches are compositionally biased toward polar residues: residues 364 to 384 (TVSS…QETA), 397 to 407 (TSLSVDNTGTK), and 456 to 469 (ESTN…TSQE). Residues 474–483 (TSEKPEEKPK) show a composition bias toward basic and acidic residues. Residues 484–494 (KQSKKASKKKG) show a composition bias toward basic residues. Composition is skewed to basic and acidic residues over residues 495–509 (KKDE…TKEP) and 524–535 (EKLKDDFENVAL).

This sequence belongs to the KNR4/SMI1 family.

The sequence is that of KNR4/SMI1 homolog from Kluyveromyces lactis (strain ATCC 8585 / CBS 2359 / DSM 70799 / NBRC 1267 / NRRL Y-1140 / WM37) (Yeast).